The chain runs to 353 residues: B1 bradykinin receptor (353 aa).

Residues 1–41 (MASQTLVVFQASNQSQLPPPNATLCDGAQEAWHLLHKVLPT) lie on the Extracellular side of the membrane. N-linked (GlcNAc...) asparagine glycosylation is found at Asn13 and Asn21. A helical transmembrane segment spans residues 42–62 (CVVAICSGGLLGNLFVLSVFL). At 63–72 (VPRRRLNAAE) the chain is on the cytoplasmic side. Residues 73–93 (IYLAHLAASDLVFALGLPFWA) form a helical membrane-spanning segment. Over 94–110 (ETIRNGFHWPFGAPLCR) the chain is Extracellular. A disulfide bridge connects residues Cys109 and Cys189. A helical transmembrane segment spans residues 111 to 131 (VVNGVIKANLFISIFLVVAIS). Topologically, residues 132-154 (RDRYRALVHPVASWRRRRRRHWA) are cytoplasmic. A helical membrane pass occupies residues 155–175 (QATCVLIWTAGGLLSIPTFLL). Over 176 to 207 (RSVQVVPELNVSACVLPFPHEAWAFVRTVELN) the chain is Extracellular. An N-linked (GlcNAc...) asparagine glycan is attached at Asn185. Residues 208-228 (VLGFLLPLAAILFFNYHILAA) form a helical membrane-spanning segment. At 229–251 (LRGREQLSRTRCGGPRDGKTTAL) the chain is on the cytoplasmic side. Residues 252 to 272 (ILTLVAVFLLCWTPYHVCAFL) traverse the membrane as a helical segment. At 273–295 (EFLLHVRAIRGCFWEDFTDLGLQ) the chain is on the extracellular side. Residues 296–316 (YTNFFAFINSCLNPVIYVFWG) traverse the membrane as a helical segment. At 317-353 (QLFRTKIWELYHRCLPRKLTAVSSSRRKEIFQIFWRN) the chain is on the cytoplasmic side. Residue Cys330 is the site of S-palmitoyl cysteine attachment.

It belongs to the G-protein coupled receptor 1 family. Bradykinin receptor subfamily. BDKRB1 sub-subfamily.

Its subcellular location is the cell membrane. Functionally, this is a receptor for bradykinin. Could be a factor in chronic pain and inflammation. The protein is B1 bradykinin receptor (BDKRB1) of Sus scrofa (Pig).